Here is a 336-residue protein sequence, read N- to C-terminus: Holliday junction branch migration complex subunit RuvB (336 aa).

The segment at 4 to 184 (ADRLVSADSS…FGIVQRLEFY (181 aa)) is large ATPase domain (RuvB-L). ATP contacts are provided by residues isoleucine 23, arginine 24, glycine 65, lysine 68, threonine 69, threonine 70, 131–133 (EDY), arginine 174, tyrosine 184, and arginine 221. Position 69 (threonine 69) interacts with Mg(2+). Residues 185–255 (QIPDLQHIVS…IAAQALDMLN (71 aa)) form a small ATPAse domain (RuvB-S) region. The segment at 258-336 (AEGFDYMDRK…HFGITPPEMP (79 aa)) is head domain (RuvB-H). DNA contacts are provided by arginine 294, arginine 313, and arginine 318.

Belongs to the RuvB family. As to quaternary structure, homohexamer. Forms an RuvA(8)-RuvB(12)-Holliday junction (HJ) complex. HJ DNA is sandwiched between 2 RuvA tetramers; dsDNA enters through RuvA and exits via RuvB. An RuvB hexamer assembles on each DNA strand where it exits the tetramer. Each RuvB hexamer is contacted by two RuvA subunits (via domain III) on 2 adjacent RuvB subunits; this complex drives branch migration. In the full resolvosome a probable DNA-RuvA(4)-RuvB(12)-RuvC(2) complex forms which resolves the HJ.

The protein resides in the cytoplasm. It catalyses the reaction ATP + H2O = ADP + phosphate + H(+). Its function is as follows. The RuvA-RuvB-RuvC complex processes Holliday junction (HJ) DNA during genetic recombination and DNA repair, while the RuvA-RuvB complex plays an important role in the rescue of blocked DNA replication forks via replication fork reversal (RFR). RuvA specifically binds to HJ cruciform DNA, conferring on it an open structure. The RuvB hexamer acts as an ATP-dependent pump, pulling dsDNA into and through the RuvAB complex. RuvB forms 2 homohexamers on either side of HJ DNA bound by 1 or 2 RuvA tetramers; 4 subunits per hexamer contact DNA at a time. Coordinated motions by a converter formed by DNA-disengaged RuvB subunits stimulates ATP hydrolysis and nucleotide exchange. Immobilization of the converter enables RuvB to convert the ATP-contained energy into a lever motion, pulling 2 nucleotides of DNA out of the RuvA tetramer per ATP hydrolyzed, thus driving DNA branch migration. The RuvB motors rotate together with the DNA substrate, which together with the progressing nucleotide cycle form the mechanistic basis for DNA recombination by continuous HJ branch migration. Branch migration allows RuvC to scan DNA until it finds its consensus sequence, where it cleaves and resolves cruciform DNA. The protein is Holliday junction branch migration complex subunit RuvB of Klebsiella pneumoniae subsp. pneumoniae (strain ATCC 700721 / MGH 78578).